The sequence spans 343 residues: Protein RecA (343 aa).

Gly64 to Thr71 contacts ATP.

Belongs to the RecA family.

It localises to the cytoplasm. Functionally, can catalyze the hydrolysis of ATP in the presence of single-stranded DNA, the ATP-dependent uptake of single-stranded DNA by duplex DNA, and the ATP-dependent hybridization of homologous single-stranded DNAs. It interacts with LexA causing its activation and leading to its autocatalytic cleavage. This is Protein RecA from Bacillus thuringiensis (strain Al Hakam).